Reading from the N-terminus, the 401-residue chain is Tyrosine--tRNA ligase (401 aa).

Positions 42 to 51 match the 'HIGH' region motif; that stretch reads PTAPDLHLGH. The short motif at 226 to 230 is the 'KMSKS' region element; that stretch reads KMSKS. Lys229 is a binding site for ATP. Positions 336–397 constitute an S4 RNA-binding domain; the sequence is IALAQLLKQI…GKRRIAKLSI (62 aa).

Belongs to the class-I aminoacyl-tRNA synthetase family. TyrS type 2 subfamily. As to quaternary structure, homodimer.

The protein resides in the cytoplasm. The catalysed reaction is tRNA(Tyr) + L-tyrosine + ATP = L-tyrosyl-tRNA(Tyr) + AMP + diphosphate + H(+). Its function is as follows. Catalyzes the attachment of tyrosine to tRNA(Tyr) in a two-step reaction: tyrosine is first activated by ATP to form Tyr-AMP and then transferred to the acceptor end of tRNA(Tyr). The chain is Tyrosine--tRNA ligase from Legionella pneumophila subsp. pneumophila (strain Philadelphia 1 / ATCC 33152 / DSM 7513).